The following is a 460-amino-acid chain: Argininosuccinate lyase (460 aa).

It belongs to the lyase 1 family. Argininosuccinate lyase subfamily.

Its subcellular location is the cytoplasm. The enzyme catalyses 2-(N(omega)-L-arginino)succinate = fumarate + L-arginine. Its pathway is amino-acid biosynthesis; L-arginine biosynthesis; L-arginine from L-ornithine and carbamoyl phosphate: step 3/3. This Alteromonas mediterranea (strain DSM 17117 / CIP 110805 / LMG 28347 / Deep ecotype) protein is Argininosuccinate lyase.